We begin with the raw amino-acid sequence, 41 residues long: Photosystem II reaction center protein Y (41 aa).

A helical membrane pass occupies residues 4 to 22; that stretch reads LIVVVLPILAAVTWVVFNI.

This sequence belongs to the PsbY family. As to quaternary structure, PSII is composed of 1 copy each of membrane proteins PsbA, PsbB, PsbC, PsbD, PsbE, PsbF, PsbH, PsbI, PsbJ, PsbK, PsbL, PsbM, PsbT, PsbX, PsbY, Psb30/Ycf12, peripheral proteins PsbO, CyanoQ (PsbQ), PsbU, PsbV and a large number of cofactors. It forms dimeric complexes.

The protein resides in the cellular thylakoid membrane. Its function is as follows. Loosely associated component of the core of photosystem II (PSII), it is not always seen in crystals. PSII is a light-driven water plastoquinone oxidoreductase, using light energy to abstract electrons from H(2)O, generating a proton gradient subsequently used for ATP formation. The sequence is that of Photosystem II reaction center protein Y from Prochlorococcus marinus (strain MIT 9211).